The chain runs to 259 residues: Proteasome subunit alpha (259 aa).

Residues 226–259 (LAEGSATSATSATPGEAEAPATAPEGDVDTGSNG) are disordered. The segment covering 227–250 (AEGSATSATSATPGEAEAPATAPE) has biased composition (low complexity).

Belongs to the peptidase T1A family. The 20S proteasome core is composed of 14 alpha and 14 beta subunits that assemble into four stacked heptameric rings, resulting in a barrel-shaped structure. The two inner rings, each composed of seven catalytic beta subunits, are sandwiched by two outer rings, each composed of seven alpha subunits. The catalytic chamber with the active sites is on the inside of the barrel. Has a gated structure, the ends of the cylinder being occluded by the N-termini of the alpha-subunits. Is capped by the proteasome-associated ATPase, ARC.

It is found in the cytoplasm. It functions in the pathway protein degradation; proteasomal Pup-dependent pathway. Its activity is regulated as follows. The formation of the proteasomal ATPase ARC-20S proteasome complex, likely via the docking of the C-termini of ARC into the intersubunit pockets in the alpha-rings, may trigger opening of the gate for substrate entry. Interconversion between the open-gate and close-gate conformations leads to a dynamic regulation of the 20S proteasome proteolysis activity. Its function is as follows. Component of the proteasome core, a large protease complex with broad specificity involved in protein degradation. The chain is Proteasome subunit alpha from Streptosporangium roseum (strain ATCC 12428 / DSM 43021 / JCM 3005 / KCTC 9067 / NCIMB 10171 / NRRL 2505 / NI 9100).